We begin with the raw amino-acid sequence, 492 residues long: Cytochrome P450 26A1 (492 aa).

C437 contributes to the heme binding site.

This sequence belongs to the cytochrome P450 family. Heme serves as cofactor.

Its subcellular location is the endoplasmic reticulum membrane. It localises to the microsome membrane. The catalysed reaction is all-trans-retinoate + reduced [NADPH--hemoprotein reductase] + O2 = all-trans-(4S)-hydroxyretinoate + oxidized [NADPH--hemoprotein reductase] + H2O + H(+). It carries out the reaction all-trans-(4S)-hydroxyretinoate + reduced [NADPH--hemoprotein reductase] + O2 = all-trans-(4S,16)-dihydroxyretinoate + oxidized [NADPH--hemoprotein reductase] + H2O + H(+). It catalyses the reaction all-trans-retinoate + reduced [NADPH--hemoprotein reductase] + O2 = all-trans-18-hydroxyretinoate + oxidized [NADPH--hemoprotein reductase] + H2O + H(+). Its function is as follows. A cytochrome P450 monooxygenase involved in the metabolism of retinoates (RAs), the active metabolites of vitamin A, and critical signaling molecules in animals. RAs exist as at least four different isomers: all-trans-RA (atRA), 9-cis-RA, 13-cis-RA, and 9,13-dicis-RA, where atRA is considered to be the biologically active isomer, although 9-cis-RA and 13-cis-RA also have activity. Catalyzes the hydroxylation of atRA primarily at C-4 and C-18, thereby contributing to the regulation of atRA homeostasis and signaling. Hydroxylation of atRA limits its biological activity and initiates a degradative process leading to its eventual elimination. Involved in the convertion of atRA to all-trans-4-oxo-RA. Able to metabolize other RAs such as 9-cis, 13-cis and 9,13-di-cis RA. Can oxidize all-trans-13,14-dihydroretinoate (DRA) to metabolites which could include all-trans-4-oxo-DRA, all-trans-4-hydroxy-DRA, all-trans-5,8-epoxy-DRA, and all-trans-18-hydroxy-DRA. May play a role in the oxidative metabolism of xenobiotics such as tazarotenic acid. The polypeptide is Cytochrome P450 26A1 (CYP26A1) (Gallus gallus (Chicken)).